The primary structure comprises 283 residues: uncharacterized protein (283 aa).

3 helical membrane-spanning segments follow: residues Leu-24–Ile-44, Thr-64–Ala-84, and Val-96–Ser-116.

The protein belongs to the MscS (TC 1.A.23) family.

It is found in the cell membrane. This is an uncharacterized protein from Buchnera aphidicola subsp. Schizaphis graminum (strain Sg).